Here is a 98-residue protein sequence, read N- to C-terminus: Large ribosomal subunit protein uL23 (98 aa).

Belongs to the universal ribosomal protein uL23 family. Part of the 50S ribosomal subunit. Contacts protein L29, and trigger factor when it is bound to the ribosome.

In terms of biological role, one of the early assembly proteins it binds 23S rRNA. One of the proteins that surrounds the polypeptide exit tunnel on the outside of the ribosome. Forms the main docking site for trigger factor binding to the ribosome. The chain is Large ribosomal subunit protein uL23 from Bifidobacterium animalis subsp. lactis (strain AD011).